We begin with the raw amino-acid sequence, 261 residues long: Imidazole glycerol phosphate synthase subunit HisF (261 aa).

Residues Asp-16 and Asp-135 contribute to the active site.

This sequence belongs to the HisA/HisF family. In terms of assembly, heterodimer of HisH and HisF.

Its subcellular location is the cytoplasm. The catalysed reaction is 5-[(5-phospho-1-deoxy-D-ribulos-1-ylimino)methylamino]-1-(5-phospho-beta-D-ribosyl)imidazole-4-carboxamide + L-glutamine = D-erythro-1-(imidazol-4-yl)glycerol 3-phosphate + 5-amino-1-(5-phospho-beta-D-ribosyl)imidazole-4-carboxamide + L-glutamate + H(+). Its pathway is amino-acid biosynthesis; L-histidine biosynthesis; L-histidine from 5-phospho-alpha-D-ribose 1-diphosphate: step 5/9. Functionally, IGPS catalyzes the conversion of PRFAR and glutamine to IGP, AICAR and glutamate. The HisF subunit catalyzes the cyclization activity that produces IGP and AICAR from PRFAR using the ammonia provided by the HisH subunit. The chain is Imidazole glycerol phosphate synthase subunit HisF from Mycolicibacterium smegmatis (strain ATCC 700084 / mc(2)155) (Mycobacterium smegmatis).